The primary structure comprises 225 residues: Viral late gene transcription factor 3 (225 aa).

Residues 7 to 27 (CSNCKHNGLITESNHEFCIFC) fold into a zinc finger.

The protein belongs to the nucleo-cytoplasmic large DNA viruses (NCLDVs) VLTF-3 family. Interacts with the late transcription elongation factor H5/VLTF-4. Interacts with the late transcription factors VLTF-1.

Acts with RNA polymerase to initiate transcription from late gene promoters. This chain is Viral late gene transcription factor 3 (VLTF3), found in Fowlpox virus (strain NVSL) (FPV).